A 491-amino-acid polypeptide reads, in one-letter code: Glutamate--tRNA ligase (491 aa).

The short motif at 9–19 (PSPTGTPHVGL) is the 'HIGH' region element. The 'KMSKS' region motif lies at 253-257 (KLSKR). Lys-256 lines the ATP pocket.

Belongs to the class-I aminoacyl-tRNA synthetase family. Glutamate--tRNA ligase type 1 subfamily. Monomer.

The protein localises to the cytoplasm. It catalyses the reaction tRNA(Glu) + L-glutamate + ATP = L-glutamyl-tRNA(Glu) + AMP + diphosphate. Catalyzes the attachment of glutamate to tRNA(Glu) in a two-step reaction: glutamate is first activated by ATP to form Glu-AMP and then transferred to the acceptor end of tRNA(Glu). This Mycolicibacterium gilvum (strain PYR-GCK) (Mycobacterium gilvum (strain PYR-GCK)) protein is Glutamate--tRNA ligase.